The sequence spans 282 residues: Pantothenate synthetase (282 aa).

ATP is bound at residue 30–37 (MGALHAGH). Histidine 37 (proton donor) is an active-site residue. Glutamine 61 provides a ligand contact to (R)-pantoate. Glutamine 61 lines the beta-alanine pocket. 147–150 (GEKD) serves as a coordination point for ATP. Residue glutamine 153 coordinates (R)-pantoate. Residues valine 177 and 185–188 (LSSR) contribute to the ATP site.

This sequence belongs to the pantothenate synthetase family. Homodimer.

Its subcellular location is the cytoplasm. It catalyses the reaction (R)-pantoate + beta-alanine + ATP = (R)-pantothenate + AMP + diphosphate + H(+). Its pathway is cofactor biosynthesis; (R)-pantothenate biosynthesis; (R)-pantothenate from (R)-pantoate and beta-alanine: step 1/1. Its function is as follows. Catalyzes the condensation of pantoate with beta-alanine in an ATP-dependent reaction via a pantoyl-adenylate intermediate. The sequence is that of Pantothenate synthetase from Phocaeicola vulgatus (strain ATCC 8482 / DSM 1447 / JCM 5826 / CCUG 4940 / NBRC 14291 / NCTC 11154) (Bacteroides vulgatus).